The primary structure comprises 426 residues: Serine hydroxymethyltransferase (426 aa).

Residues L118 and 122–124 (GHL) each bind (6S)-5,6,7,8-tetrahydrofolate. Residue K227 is modified to N6-(pyridoxal phosphate)lysine.

Belongs to the SHMT family. In terms of assembly, homodimer. It depends on pyridoxal 5'-phosphate as a cofactor.

The protein resides in the cytoplasm. The enzyme catalyses (6R)-5,10-methylene-5,6,7,8-tetrahydrofolate + glycine + H2O = (6S)-5,6,7,8-tetrahydrofolate + L-serine. It functions in the pathway one-carbon metabolism; tetrahydrofolate interconversion. The protein operates within amino-acid biosynthesis; glycine biosynthesis; glycine from L-serine: step 1/1. Functionally, catalyzes the reversible interconversion of serine and glycine with tetrahydrofolate (THF) serving as the one-carbon carrier. This reaction serves as the major source of one-carbon groups required for the biosynthesis of purines, thymidylate, methionine, and other important biomolecules. Also exhibits THF-independent aldolase activity toward beta-hydroxyamino acids, producing glycine and aldehydes, via a retro-aldol mechanism. The chain is Serine hydroxymethyltransferase from Mycobacterium leprae (strain Br4923).